A 174-amino-acid polypeptide reads, in one-letter code: ATP synthase subunit b (174 aa).

The chain crosses the membrane as a helical span at residues 18–38 (IIVVSGSFLILMFLLKHFAWG).

Belongs to the ATPase B chain family. F-type ATPases have 2 components, F(1) - the catalytic core - and F(0) - the membrane proton channel. F(1) has five subunits: alpha(3), beta(3), gamma(1), delta(1), epsilon(1). F(0) has three main subunits: a(1), b(2) and c(10-14). The alpha and beta chains form an alternating ring which encloses part of the gamma chain. F(1) is attached to F(0) by a central stalk formed by the gamma and epsilon chains, while a peripheral stalk is formed by the delta and b chains.

Its subcellular location is the cell membrane. Its function is as follows. F(1)F(0) ATP synthase produces ATP from ADP in the presence of a proton or sodium gradient. F-type ATPases consist of two structural domains, F(1) containing the extramembraneous catalytic core and F(0) containing the membrane proton channel, linked together by a central stalk and a peripheral stalk. During catalysis, ATP synthesis in the catalytic domain of F(1) is coupled via a rotary mechanism of the central stalk subunits to proton translocation. Component of the F(0) channel, it forms part of the peripheral stalk, linking F(1) to F(0). The chain is ATP synthase subunit b from Enterococcus hirae (strain ATCC 9790 / DSM 20160 / JCM 8729 / LMG 6399 / NBRC 3181 / NCIMB 6459 / NCDO 1258 / NCTC 12367 / WDCM 00089 / R).